A 253-amino-acid chain; its full sequence is Probable transcriptional regulatory protein Synpcc7942_1017 (253 aa).

Belongs to the TACO1 family.

It is found in the cytoplasm. The sequence is that of Probable transcriptional regulatory protein Synpcc7942_1017 from Synechococcus elongatus (strain ATCC 33912 / PCC 7942 / FACHB-805) (Anacystis nidulans R2).